Consider the following 202-residue polypeptide: Small ribosomal subunit protein uS4c (202 aa).

The S4 RNA-binding domain occupies 90 to 153 (MRLDNIIFRL…KSETIISKNI (64 aa)).

This sequence belongs to the universal ribosomal protein uS4 family. In terms of assembly, part of the 30S ribosomal subunit. Contacts protein S5. The interaction surface between S4 and S5 is involved in control of translational fidelity.

It is found in the plastid. The protein localises to the chloroplast. Functionally, one of the primary rRNA binding proteins, it binds directly to 16S rRNA where it nucleates assembly of the body of the 30S subunit. Its function is as follows. With S5 and S12 plays an important role in translational accuracy. The sequence is that of Small ribosomal subunit protein uS4c (rps4) from Catharomnion ciliatum (Moss).